A 510-amino-acid chain; its full sequence is Hyaluronidase PH-20 (510 aa).

Positions 1–35 (MGVLKFKHIFFRSFVKSSGVSQIVFTFLLIPCCLT) are cleaved as a signal peptide. 2 cysteine pairs are disulfide-bonded: cysteine 60/cysteine 351 and cysteine 224/cysteine 238. The N-linked (GlcNAc...) asparagine glycan is linked to asparagine 82. Catalysis depends on glutamate 148, which acts as the Proton donor. 4 N-linked (GlcNAc...) asparagine glycosylation sites follow: asparagine 166, asparagine 235, asparagine 254, and asparagine 368. 3 disulfides stabilise this stretch: cysteine 376–cysteine 387, cysteine 381–cysteine 435, and cysteine 437–cysteine 464. N-linked (GlcNAc...) asparagine glycosylation is found at asparagine 393, asparagine 440, and asparagine 484. Serine 491 carries GPI-anchor amidated serine lipidation. The propeptide at 492–510 (TTMFIVNILFLIISSVASL) is removed in mature form.

It belongs to the glycosyl hydrolase 56 family. As to expression, testis.

Its subcellular location is the cell membrane. It catalyses the reaction Random hydrolysis of (1-&gt;4)-linkages between N-acetyl-beta-D-glucosamine and D-glucuronate residues in hyaluronate.. Its function is as follows. Involved in sperm-egg adhesion. Upon fertilization sperm must first penetrate a layer of cumulus cells that surrounds the egg before reaching the zona pellucida. The cumulus cells are embedded in a matrix containing hyaluronic acid which is formed prior to ovulation. This protein aids in penetrating the layer of cumulus cells by digesting hyaluronic acid. The chain is Hyaluronidase PH-20 (SPAM1) from Macaca fascicularis (Crab-eating macaque).